An 84-amino-acid polypeptide reads, in one-letter code: Large ribosomal subunit protein bL27 (84 aa).

The disordered stretch occupies residues 1 to 21; sequence MAHKKGGGSTKNGRDSNPKYL.

The protein belongs to the bacterial ribosomal protein bL27 family.

This is Large ribosomal subunit protein bL27 from Pelodictyon phaeoclathratiforme (strain DSM 5477 / BU-1).